The following is a 32-amino-acid chain: Islet amyloid polypeptide (32 aa).

Belongs to the calcitonin family. As to quaternary structure, can form homodimers. Interacts with IDE and INS. Interaction with INS inhibits homodimerization and fibril formation.

It is found in the secreted. Its function is as follows. Amylin/IAPP is a glucoregulatory peptide hormone that plays an important role in the regulation of energy homeostasis. Selectively inhibits insulin-stimulated glucose utilization and glycogen deposition in muscle, while not affecting adipocyte glucose metabolism. IAPP function is mediated by the CALCR-RAMPs (AMYRs) receptor complexes. Amylin can also bind CALCR receptor in the absence of RAMPs, although it is more selective for AMYRs. The polypeptide is Islet amyloid polypeptide (IAPP) (Saguinus oedipus (Cotton-top tamarin)).